A 227-amino-acid polypeptide reads, in one-letter code: MVQESFDCYLLDIEGTICPISFVKETLFPFFLQNLSKIIEHPTDDQLTILSKFNINDSTELYNHINNLVLNDIKDPILKQLQGHVWQEGYENGLIKAPIYQDSIEFIKDNGNRIYIYSSGSVRAQKLLFEFVACNDGKETIDLRPSILDYFDINTSGVKTESSSYDKIAKTIEHSEHRERILFLSDNPKELEAASSAGLSTRLVIRPGNAPVEDDTKYTSIRSLSEL.

Positions 12 and 14 each coordinate Mg(2+). Residues 118–119 (SS) and K159 each bind substrate. D186 lines the Mg(2+) pocket.

This sequence belongs to the HAD-like hydrolase superfamily. MasA/MtnC family. As to quaternary structure, monomer. Requires Mg(2+) as cofactor.

The protein resides in the cytoplasm. It is found in the nucleus. The enzyme catalyses 5-methylsulfanyl-2,3-dioxopentyl phosphate + H2O = 1,2-dihydroxy-5-(methylsulfanyl)pent-1-en-3-one + phosphate. It functions in the pathway amino-acid biosynthesis; L-methionine biosynthesis via salvage pathway; L-methionine from S-methyl-5-thio-alpha-D-ribose 1-phosphate: step 3/6. It participates in amino-acid biosynthesis; L-methionine biosynthesis via salvage pathway; L-methionine from S-methyl-5-thio-alpha-D-ribose 1-phosphate: step 4/6. Its function is as follows. Bifunctional enzyme that catalyzes the enolization of 2,3-diketo-5-methylthiopentyl-1-phosphate (DK-MTP-1-P) into the intermediate 2-hydroxy-3-keto-5-methylthiopentenyl-1-phosphate (HK-MTPenyl-1-P), which is then dephosphorylated to form the acireductone 1,2-dihydroxy-3-keto-5-methylthiopentene (DHK-MTPene). The chain is Enolase-phosphatase E1 from Vanderwaltozyma polyspora (strain ATCC 22028 / DSM 70294 / BCRC 21397 / CBS 2163 / NBRC 10782 / NRRL Y-8283 / UCD 57-17) (Kluyveromyces polysporus).